The chain runs to 435 residues: Tol-Pal system protein TolB (435 aa).

An N-terminal signal peptide occupies residues 1-26 (MKTFSLLRILIVLVGMAGAFATPAMA).

It belongs to the TolB family. In terms of assembly, the Tol-Pal system is composed of five core proteins: the inner membrane proteins TolA, TolQ and TolR, the periplasmic protein TolB and the outer membrane protein Pal. They form a network linking the inner and outer membranes and the peptidoglycan layer.

The protein localises to the periplasm. Functionally, part of the Tol-Pal system, which plays a role in outer membrane invagination during cell division and is important for maintaining outer membrane integrity. This chain is Tol-Pal system protein TolB, found in Allorhizobium ampelinum (strain ATCC BAA-846 / DSM 112012 / S4) (Agrobacterium vitis (strain S4)).